Consider the following 275-residue polypeptide: Sulfur carrier protein FdhD (275 aa).

Cysteine 121 (cysteine persulfide intermediate) is an active-site residue. A Mo-bis(molybdopterin guanine dinucleotide)-binding site is contributed by 258 to 263; the sequence is FSKPGR.

It belongs to the FdhD family.

The protein localises to the cytoplasm. Required for formate dehydrogenase (FDH) activity. Acts as a sulfur carrier protein that transfers sulfur from IscS to the molybdenum cofactor prior to its insertion into FDH. This is Sulfur carrier protein FdhD from Yersinia enterocolitica serotype O:8 / biotype 1B (strain NCTC 13174 / 8081).